Here is a 165-residue protein sequence, read N- to C-terminus: Growth arrest and DNA damage-inducible protein GADD45 alpha (165 aa).

A Phosphothreonine modification is found at T2.

It belongs to the GADD45 family. In terms of assembly, interacts with AURKA, PCNA, GADD45GIP1 and MAPK14.

It is found in the nucleus. Its function is as follows. Might affect PCNA interaction with some CDK (cell division protein kinase) complexes; stimulates DNA excision repair in vitro and inhibits entry of cells into S phase. In T-cells, functions as a regulator of p38 MAPKs by inhibiting p88 phosphorylation and activity. In Rattus norvegicus (Rat), this protein is Growth arrest and DNA damage-inducible protein GADD45 alpha (Gadd45a).